The sequence spans 473 residues: 3-isopropylmalate dehydratase large subunit (473 aa).

[4Fe-4S] cluster is bound by residues Cys354, Cys414, and Cys417. A disordered region spans residues 425-448 (LAPGQRSASTSNRNFEGRQGRGGR).

This sequence belongs to the aconitase/IPM isomerase family. LeuC type 1 subfamily. As to quaternary structure, heterodimer of LeuC and LeuD. It depends on [4Fe-4S] cluster as a cofactor.

It catalyses the reaction (2R,3S)-3-isopropylmalate = (2S)-2-isopropylmalate. It functions in the pathway amino-acid biosynthesis; L-leucine biosynthesis; L-leucine from 3-methyl-2-oxobutanoate: step 2/4. Functionally, catalyzes the isomerization between 2-isopropylmalate and 3-isopropylmalate, via the formation of 2-isopropylmaleate. The chain is 3-isopropylmalate dehydratase large subunit from Acidothermus cellulolyticus (strain ATCC 43068 / DSM 8971 / 11B).